We begin with the raw amino-acid sequence, 406 residues long: GTPase Obg (406 aa).

The 159-residue stretch at 1 to 159 (MRFVDEAVIT…REIRLELKVL (159 aa)) folds into the Obg domain. A disordered region spans residues 120-143 (GGEGGLGNTHFKSSTNRAPRKCTT). The OBG-type G domain occupies 160 to 333 (ADVGLLGMPN…VVYYLMDQIE (174 aa)). Residues 166 to 173 (GMPNAGKS), 191 to 195 (FTTMV), 213 to 216 (DIPG), 283 to 286 (NKLD), and 314 to 316 (SGL) contribute to the GTP site. Positions 173 and 193 each coordinate Mg(2+). Residues 381 to 406 (ESMMDDDDDFDDDEDDGDVESIYVRD) are disordered. Acidic residues predominate over residues 383–399 (MMDDDDDFDDDEDDGDV).

This sequence belongs to the TRAFAC class OBG-HflX-like GTPase superfamily. OBG GTPase family. In terms of assembly, monomer. Mg(2+) serves as cofactor.

The protein resides in the cytoplasm. Its function is as follows. An essential GTPase which binds GTP, GDP and possibly (p)ppGpp with moderate affinity, with high nucleotide exchange rates and a fairly low GTP hydrolysis rate. Plays a role in control of the cell cycle, stress response, ribosome biogenesis and in those bacteria that undergo differentiation, in morphogenesis control. This chain is GTPase Obg, found in Acinetobacter baumannii (strain ACICU).